We begin with the raw amino-acid sequence, 614 residues long: ATP-dependent zinc metalloprotease FtsH (614 aa).

The Cytoplasmic segment spans residues 1–5 (MLPIR). Residues 6–26 (WFLALLAVFLAVAGLDLWFSQ) traverse the membrane as a helical segment. Residues 27–127 (TGARPSSATG…AVSARERTAS (101 aa)) lie on the Periplasmic side of the membrane. The chain crosses the membrane as a helical span at residues 128-148 (IVHAIVHPLGLITLIVGILFV). Residues 149–614 (VQRYAGRFTA…AQHPPSALAG (466 aa)) are Cytoplasmic-facing. 214–221 (GPPGTGKT) provides a ligand contact to ATP. His436 is a Zn(2+) binding site. Residue Glu437 is part of the active site. The Zn(2+) site is built by His440 and Asp513.

The protein in the central section; belongs to the AAA ATPase family. This sequence in the C-terminal section; belongs to the peptidase M41 family. In terms of assembly, homohexamer. It depends on Zn(2+) as a cofactor.

The protein resides in the cell inner membrane. Functionally, acts as a processive, ATP-dependent zinc metallopeptidase for both cytoplasmic and membrane proteins. Plays a role in the quality control of integral membrane proteins. The chain is ATP-dependent zinc metalloprotease FtsH from Opitutus terrae (strain DSM 11246 / JCM 15787 / PB90-1).